The primary structure comprises 297 residues: Phosphoribosylaminoimidazole-succinocarboxamide synthase (297 aa).

This sequence belongs to the SAICAR synthetase family.

The enzyme catalyses 5-amino-1-(5-phospho-D-ribosyl)imidazole-4-carboxylate + L-aspartate + ATP = (2S)-2-[5-amino-1-(5-phospho-beta-D-ribosyl)imidazole-4-carboxamido]succinate + ADP + phosphate + 2 H(+). The protein operates within purine metabolism; IMP biosynthesis via de novo pathway; 5-amino-1-(5-phospho-D-ribosyl)imidazole-4-carboxamide from 5-amino-1-(5-phospho-D-ribosyl)imidazole-4-carboxylate: step 1/2. The chain is Phosphoribosylaminoimidazole-succinocarboxamide synthase from Mycobacterium marinum (strain ATCC BAA-535 / M).